The following is a 482-amino-acid chain: U2 small nuclear ribonucleoprotein auxiliary factor 35 kDa subunit-related protein 2 (482 aa).

Residues 1-59 are disordered; sequence MAAPEKMTFPEKPSHKKYRAALKKEKRKKRRQELARLRDSGLSQKEEEEDTFIEEQQLE. A compositionally biased stretch (basic residues) spans 14–31; the sequence is SHKKYRAALKKEKRKKRR. A Glycyl lysine isopeptide (Lys-Gly) (interchain with G-Cter in SUMO2) cross-link involves residue Lys-45. The span at 46-58 shows a compositional bias: acidic residues; that stretch reads EEEEDTFIEEQQL. Lys-62 is covalently cross-linked (Glycyl lysine isopeptide (Lys-Gly) (interchain with G-Cter in SUMO2)). The interval 115–135 is disordered; the sequence is QRKEREEEEQKRQEKKEKEEA. Residues 166–194 form a C3H1-type 1 zinc finger; that stretch reads EKDRANCPFYSKTGACRFGDRCSRKHNFP. An RRM domain is found at 198–304; sequence PTLLIKSMFT…RQLQCEFCPV (107 aa). The segment at 306–333 adopts a C3H1-type 2 zinc-finger fold; that stretch reads RWKMAICGLFEIQQCPRGKHCNFLHVFR. Ser-349 is subject to Phosphoserine. The segment at 351–482 is disordered; that stretch reads DRTGSSFGKN…DRTVQSPKSK (132 aa). 2 stretches are compositionally biased toward basic and acidic residues: residues 360-375 and 383-398; these read NSER…DYYS and PSPD…SERK. Residue Ser-384 is modified to Phosphoserine. The span at 399 to 412 shows a compositional bias: basic residues; the sequence is SSRHRGKKSHKRTS. Over residues 413–435 the composition is skewed to basic and acidic residues; that stretch reads KSRERHNSRSRGRNRDRSRDRSR. Residues 436–454 are compositionally biased toward basic residues; the sequence is GRGSRSRSRSRSRRSRRSR.

As to quaternary structure, component of the U11/U12 snRNPs that are part of the U12-type spliceosome. Interacts (via RS domain) with SRSF1 and SRSF2. Interacts with U2AF2/U2AF65. In terms of processing, phosphorylated in the RS domain by SRPK1. In terms of tissue distribution, widely expressed.

It is found in the nucleus. Functionally, pre-mRNA-binding protein required for splicing of both U2- and U12-type introns. Selectively interacts with the 3'-splice site of U2- and U12-type pre-mRNAs and promotes different steps in U2 and U12 intron splicing. Recruited to U12 pre-mRNAs in an ATP-dependent manner and is required for assembly of the pre-spliceosome, a precursor to other spliceosomal complexes. For U2-type introns, it is selectively and specifically required for the second step of splicing. This chain is U2 small nuclear ribonucleoprotein auxiliary factor 35 kDa subunit-related protein 2 (ZRSR2), found in Homo sapiens (Human).